The following is a 466-amino-acid chain: Integrator complex subunit 12 (466 aa).

A disordered region spans residues 41 to 101 (KGNDSVYRPQ…EAEKRSADKM (61 aa)). The span at 69–84 (KASSSTPSSSMLSKPL) shows a compositional bias: low complexity. Positions 85–101 (TSEKLKKEAEKRSADKM) are enriched in basic and acidic residues. The PHD-type zinc finger occupies 156–212 (GLACVVCRQMTVFSGNQLVECQECHNLYHQDCHKPQVTDKDVNDPRLVWYCARCTRQ). 2 disordered regions span residues 216–251 (MAQKNQKPSQKPSPSAVSAVTPVAKDPSVNKPELKA) and 311–466 (GTSS…KLKK). Composition is skewed to polar residues over residues 218–233 (QKNQKPSQKPSPSAVS) and 311–329 (GTSSQATSGKPPSLSSVQK). A compositionally biased stretch (low complexity) spans 338-373 (PSKPGSVSKSGSGGSSSSSTIPIKPLPPLILGKTGL). Over residues 374–386 (SRSMSSDNVSKTG) the composition is skewed to polar residues. Over residues 392 to 423 (PSSAGSVSSLSSQLGSNNGSSSAAGSNVTSSN) the composition is skewed to low complexity. Positions 453-466 (QMVKKKAAQKKLKK) are enriched in basic residues.

This sequence belongs to the Integrator subunit 12 family. Component of the Integrator complex, composed of core subunits INTS1, INTS2, INTS3, INTS4, INTS5, INTS6, INTS7, INTS8, INTS9/RC74, INTS10, INTS11/CPSF3L, INTS12, INTS13, INTS14 and INTS15. The core complex associates with protein phosphatase 2A subunits PPP2CA and PPP2R1A, to form the Integrator-PP2A (INTAC) complex.

It is found in the nucleus. Component of the integrator complex, a multiprotein complex that terminates RNA polymerase II (Pol II) transcription in the promoter-proximal region of genes. The integrator complex provides a quality checkpoint during transcription elongation by driving premature transcription termination of transcripts that are unfavorably configured for transcriptional elongation: the complex terminates transcription by (1) catalyzing dephosphorylation of the C-terminal domain (CTD) of Pol II subunit POLR2A/RPB1 and SUPT5H/SPT5, (2) degrading the exiting nascent RNA transcript via endonuclease activity and (3) promoting the release of Pol II from bound DNA. The integrator complex is also involved in terminating the synthesis of non-coding Pol II transcripts, such as enhancer RNAs (eRNAs), small nuclear RNAs (snRNAs), telomerase RNAs and long non-coding RNAs (lncRNAs). The chain is Integrator complex subunit 12 (ints12) from Xenopus tropicalis (Western clawed frog).